We begin with the raw amino-acid sequence, 80 residues long: Small ribosomal subunit protein uS17 (80 aa).

It belongs to the universal ribosomal protein uS17 family. As to quaternary structure, part of the 30S ribosomal subunit.

One of the primary rRNA binding proteins, it binds specifically to the 5'-end of 16S ribosomal RNA. This is Small ribosomal subunit protein uS17 from Cereibacter sphaeroides (strain ATCC 17029 / ATH 2.4.9) (Rhodobacter sphaeroides).